We begin with the raw amino-acid sequence, 377 residues long: Probable sensor histidine kinase HK (377 aa).

Disordered stretches follow at residues Met-1 to Asp-169 and Leu-346 to Gln-377. A compositionally biased stretch (basic residues) spans Arg-10 to Ser-54. Residues Arg-84 to Ala-98 are compositionally biased toward basic and acidic residues. Composition is skewed to basic residues over residues Ala-99–Asp-115 and Thr-137–Arg-146. The Histidine kinase domain maps to Arg-146 to Arg-350. Residue His-149 is modified to Phosphohistidine; by autocatalysis. The span at Pro-352–Gln-377 shows a compositional bias: basic and acidic residues.

In terms of processing, autophosphorylated.

It catalyses the reaction ATP + protein L-histidine = ADP + protein N-phospho-L-histidine.. Its function is as follows. Member of the two-component system HK/TcrA. Phosphorylates TcrA. This chain is Probable sensor histidine kinase HK, found in Mycobacterium tuberculosis (strain CDC 1551 / Oshkosh).